The sequence spans 254 residues: Low affinity immunoglobulin gamma Fc region receptor III-A (254 aa).

The signal sequence occupies residues 1 to 16; the sequence is MWQLLLPTALLLLVSA. The Extracellular segment spans residues 17-208; the sequence is GMRTEDLPKA…ISSFFPPGYQ (192 aa). Ig-like C2-type domains are found at residues 24-105 and 107-189; these read PKAV…LEVH and GWLL…VNIT. Cys-47 and Cys-89 form a disulfide bridge. Asn-56, Asn-63, and Asn-92 each carry an N-linked (GlcNAc...) asparagine glycan. A disulfide bond links Cys-128 and Cys-172. N-linked (GlcNAc...) asparagine glycans are attached at residues Asn-180 and Asn-187. A helical transmembrane segment spans residues 209-229; that stretch reads VSFCLVMVLLFAVDTGLYFSV. At 230–254 the chain is on the cytoplasmic side; it reads KTNIRSSTRDWKDHKFKWRKDPQDK. Phosphoserine; by PKC is present on Ser-236. A Phosphothreonine; by PKC modification is found at Thr-237.

Forms a heterooligomeric complex with ITAM-containing signaling subunits, either a homodimer of CD247, a homodimer of FCER1G or a heterodimer of CD247 and FCER1G. Interacts (via transmembrane domain) with signaling subunits; this interaction is a prerequisite for receptor complex expression on the cell surface and intracellular signal transduction. Binds the Fc region of antigen-complexed IgG with a preference for IgG1 and IgG3 isotypes. Interacts with CD2; this interaction is involved in NK cell activation and cytotoxicity. Interacts with S100A4; this interaction inhibits PKC-dependent phosphorylation of FCGR3A. Glycosylated. Contains high mannose- and complex-type oligosaccharides. Glycosylation at Asn-180 is mandatory for high affinity binding to the Fc and for discrimination between fucosylated and afucosylated IgG glycoforms. Post-translationally, undergoes rapid ectodomain shedding upon NK cell stimulation. The soluble form is produced by a proteolytic cleavage mediated by ADAM17. Repeated stimulation causes receptor shedding, a mechanism that allows for increased NK cell motility and detachment from opsonized target cells while avoiding activation-induced NK cell apoptosis. In terms of processing, phosphorylated at RSSTR motif by PKC. The relevant physiological PKCs might be PRKCI, PRKCG, PRKCE, PRKCH and PRKCQ. As to expression, expressed in natural killer cells (at protein level). Expressed in a subset of circulating monocytes (at protein level).

The protein localises to the cell membrane. It localises to the secreted. Functionally, receptor for the invariable Fc fragment of immunoglobulin gamma (IgG). Optimally activated upon binding of clustered antigen-IgG complexes displayed on cell surfaces, triggers lysis of antibody-coated cells, a process known as antibody-dependent cellular cytotoxicity (ADCC). Does not bind free monomeric IgG, thus avoiding inappropriate effector cell activation in the absence of antigenic trigger. Mediates IgG effector functions on natural killer (NK) cells. Binds antigen-IgG complexes generated upon infection and triggers NK cell-dependent cytokine production and degranulation to limit viral load and propagation. Involved in the generation of memory-like adaptive NK cells capable to produce high amounts of IFNG and to efficiently eliminate virus-infected cells via ADCC. Regulates NK cell survival and proliferation, in particular by preventing NK cell progenitor apoptosis. Fc-binding subunit that associates with CD247 and/or FCER1G adapters to form functional signaling complexes. Following the engagement of antigen-IgG complexes, triggers phosphorylation of immunoreceptor tyrosine-based activation motif (ITAM)-containing adapters with subsequent activation of phosphatidylinositol 3-kinase signaling and sustained elevation of intracellular calcium that ultimately drive NK cell activation. The ITAM-dependent signaling coupled to receptor phosphorylation by PKC mediates robust intracellular calcium flux that leads to production of pro-inflammatory cytokines, whereas in the absence of receptor phosphorylation it mainly activates phosphatidylinositol 3-kinase signaling leading to cell degranulation. Costimulates NK cells and trigger lysis of target cells independently of IgG binding. Mediates the antitumor activities of therapeutic antibodies. Upon ligation on monocytes triggers TNFA-dependent ADCC of IgG-coated tumor cells. Mediates enhanced ADCC in response to afucosylated IgGs. (Microbial infection) Involved in Dengue virus pathogenesis via antibody-dependent enhancement (ADE) mechanism. Secondary infection with Dengue virus triggers elevated levels of afucosylated non-neutralizing IgG1s with reactivity to viral envelope/E protein. Viral antigen-IgG1 complexes bind with high affinity to FCGR3A, facilitating virus entry in myeloid cells and subsequent viral replication. This Homo sapiens (Human) protein is Low affinity immunoglobulin gamma Fc region receptor III-A.